We begin with the raw amino-acid sequence, 340 residues long: Lipase chaperone (340 aa).

A helical membrane pass occupies residues 4–24; that stretch reads ILLLIPLAFAASLAWFVWLEP. Residues 29–51 form a disordered region; sequence ETAPPASPQAGADRAPPAASAGE. The segment covering 36 to 51 has biased composition (low complexity); it reads PQAGADRAPPAASAGE.

This sequence belongs to the lipase chaperone family.

Its subcellular location is the cell inner membrane. Its function is as follows. May be involved in the folding of the extracellular lipase during its passage through the periplasm. This chain is Lipase chaperone (lifO), found in Pseudomonas aeruginosa (strain ATCC 15692 / DSM 22644 / CIP 104116 / JCM 14847 / LMG 12228 / 1C / PRS 101 / PAO1).